A 531-amino-acid chain; its full sequence is UDP-glucuronosyltransferase 1A6 (531 aa).

Positions methionine 1 to glycine 26 are cleaved as a signal peptide. Asparagine 294 carries an N-linked (GlcNAc...) asparagine glycan. Residues valine 489–phenylalanine 505 form a helical membrane-spanning segment.

The protein belongs to the UDP-glycosyltransferase family.

It is found in the microsome. Its subcellular location is the endoplasmic reticulum membrane. It carries out the reaction glucuronate acceptor + UDP-alpha-D-glucuronate = acceptor beta-D-glucuronoside + UDP + H(+). The catalysed reaction is (5Z,8Z,11Z,14Z)-eicosatetraenoate + UDP-alpha-D-glucuronate = O-[(5Z),(8Z),(11Z),(14Z)-eicosatetraenoyl]-beta-D-glucuronate + UDP. The enzyme catalyses 15-hydroxy-(5Z,8Z,11Z,13E)-eicosatetraenoate + UDP-alpha-D-glucuronate = 15-O-(beta-D-glucuronosyl)-(5Z,8Z,11Z,14Z)-eicosatetraenoate + UDP + H(+). It catalyses the reaction (E)-ferulate + UDP-alpha-D-glucuronate = (E)-4-O-(beta-D-glucuronosyl)-ferulate + UDP + H(+). It carries out the reaction (E)-ferulate + UDP-alpha-D-glucuronate = (E)-ferulic acid beta-D-glucuronate ester + UDP. Functionally, UDP-glucuronosyltransferase (UGT) that catalyzes phase II biotransformation reactions in which lipophilic substrates are conjugated with glucuronic acid to facilitate their inactivation and excretion from the body. Essential for the elimination and detoxification of drugs, xenobiotics and endogenous compounds. Involved in the glucuronidation of arachidonic acid (AA) and AA-derived eicosanoids including 15-HETE and 20-HETE. Conjugates small planar phenolic molecules such as 4-nitrophenol, 1-naphthol, and 4-methylumbelliferone. The bulky phenol 4-hydroxybiphenyl, androgens and estrogens are not substrates. 2-hydroxybiphenyl is an excellent substrate. Involved in the glucuronidation of the phytochemical ferulic acid at the phenolic or the carboxylic acid group. In Oryctolagus cuniculus (Rabbit), this protein is UDP-glucuronosyltransferase 1A6 (UGT1).